The following is a 690-amino-acid chain: Elongation factor G (690 aa).

The tr-type G domain occupies 8 to 283 (DKYRNIGIMA…AVVDFLPSPL (276 aa)). GTP is bound by residues 17–24 (AHIDAGKT), 81–85 (DTPGH), and 135–138 (NKLD).

Belongs to the TRAFAC class translation factor GTPase superfamily. Classic translation factor GTPase family. EF-G/EF-2 subfamily.

It localises to the cytoplasm. Functionally, catalyzes the GTP-dependent ribosomal translocation step during translation elongation. During this step, the ribosome changes from the pre-translocational (PRE) to the post-translocational (POST) state as the newly formed A-site-bound peptidyl-tRNA and P-site-bound deacylated tRNA move to the P and E sites, respectively. Catalyzes the coordinated movement of the two tRNA molecules, the mRNA and conformational changes in the ribosome. The polypeptide is Elongation factor G (Zymomonas mobilis subsp. mobilis (strain ATCC 31821 / ZM4 / CP4)).